We begin with the raw amino-acid sequence, 319 residues long: Taste receptor type 2 member 14 (319 aa).

At 1–7 (MDGVIKS) the chain is on the extracellular side. The helical transmembrane segment at 8 to 28 (IFTFILIVEFIIGNLGNSFIV) threads the bilayer. Residues 29–55 (LVNCIDWVKRRKISLVDQILIALAISR) lie on the Cytoplasmic side of the membrane. A helical transmembrane segment spans residues 56-76 (ISLVWSIFGSWCVSVFFPALF). Residues 77 to 87 (ATEKLLRMLTN) lie on the Extracellular side of the membrane. Cholesterol contacts are provided by T86 and W89. A helical transmembrane segment spans residues 88-108 (IWTVTNHFSVWLATILGTFYF). Over 109 to 129 (LKIANFSNSIFLYLKWRVKKV) the chain is Cytoplasmic. Residues 130 to 150 (VLVLLLVTLGLLFLNILLINI) form a helical membrane-spanning segment. Residues 151–184 (HINASINGYRGNMTCSSASCNFIRFSRAIALTST) are Extracellular-facing. N-linked (GlcNAc...) asparagine glycans are attached at residues N153 and N162. A180 contacts cholesterol. The helical transmembrane segment at 185 to 205 (VFVLIPFTLSLATSLLLSFSL) threads the bilayer. At 206–233 (WKHHKKMQHTVKGYRDVSTKAHRGVMQT) the chain is on the cytoplasmic side. The chain crosses the membrane as a helical span at residues 234-254 (VITFLLLYAVFLLTFFISIWA). Topologically, residues 255–263 (SVRLKENQI) are extracellular. A helical transmembrane segment spans residues 264 to 284 (IILSEMMGLAYPSGHSCVLIL). Cholesterol contacts are provided by S267 and M270. Topologically, residues 285–319 (GNKKLRQASLSVLWWLRYRFKHGEPSGHKEFRESS) are cytoplasmic.

Belongs to the G-protein coupled receptor T2R family. As to quaternary structure, core component of the TAS2R14-GNAI1 complex, consisting of TAS2R14, GNAI1, GNB1 and GNG2; within the complex interacts with GNAI1. Core component of the TAS2R14-GNAT3 complex, consisting of TAS2R14, GNAT3, GNB1 and GNG2; within the complex interacts with GNAT3. Core component of the TAS2R14-GNAS2 complex, consisting of TAS2R14, GNAS2, GNB1 and GNG2; within the complex interacts with GNAS2.

The protein resides in the membrane. It carries out the reaction Ca(2+)(in) = Ca(2+)(out). It catalyses the reaction 3',5'-cyclic AMP(in) = 3',5'-cyclic AMP(out). With respect to regulation, basal activity is enhanced by binding to bitter tastants, such as flufenamic acid and aristolochic acid. Regulated by cholesterol in a concentration-dependent manner. In terms of biological role, gustducin-linked G-protein coupled receptor that plays a role in the perception of bitterness. The activity of this receptor stimulates GNAT3, activating the gustducin G-protein pathway. Likely plays a role in sensing the chemical composition of the gastrointestinal content and other extra-oral tissues via the inhibitory G-protein pathways. The polypeptide is Taste receptor type 2 member 14 (TAS2R14) (Macaca mulatta (Rhesus macaque)).